Consider the following 892-residue polypeptide: DNA ligase (892 aa).

The interval 1 to 23 (MTMTNRDDSEQLAWDFDAPESDG) is disordered. Residues 99–103 (DAAYD), 148–149 (SL), and Glu182 each bind NAD(+). The N6-AMP-lysine intermediate role is filled by Lys184. Positions 205, 244, 369, and 393 each coordinate NAD(+). Cys490, Cys493, Cys509, and Cys515 together coordinate Zn(2+). The region spanning 810–892 (GLPQTLAGKT…KQLLDTGTVE (83 aa)) is the BRCT domain.

Belongs to the NAD-dependent DNA ligase family. LigA subfamily. Requires Mg(2+) as cofactor. The cofactor is Mn(2+).

The enzyme catalyses NAD(+) + (deoxyribonucleotide)n-3'-hydroxyl + 5'-phospho-(deoxyribonucleotide)m = (deoxyribonucleotide)n+m + AMP + beta-nicotinamide D-nucleotide.. Functionally, DNA ligase that catalyzes the formation of phosphodiester linkages between 5'-phosphoryl and 3'-hydroxyl groups in double-stranded DNA using NAD as a coenzyme and as the energy source for the reaction. It is essential for DNA replication and repair of damaged DNA. This chain is DNA ligase, found in Bifidobacterium adolescentis (strain ATCC 15703 / DSM 20083 / NCTC 11814 / E194a).